The sequence spans 559 residues: Dihydroxy-acid dehydratase (559 aa).

Cysteine 52 serves as a coordination point for [2Fe-2S] cluster. Aspartate 84 is a Mg(2+) binding site. Residue cysteine 125 participates in [2Fe-2S] cluster binding. Positions 126 and 127 each coordinate Mg(2+). Lysine 127 is modified (N6-carboxylysine). Cysteine 197 is a binding site for [2Fe-2S] cluster. Residue glutamate 447 participates in Mg(2+) binding. Residue serine 473 is the Proton acceptor of the active site.

Belongs to the IlvD/Edd family. As to quaternary structure, homodimer. [2Fe-2S] cluster serves as cofactor. Mg(2+) is required as a cofactor.

It carries out the reaction (2R)-2,3-dihydroxy-3-methylbutanoate = 3-methyl-2-oxobutanoate + H2O. The catalysed reaction is (2R,3R)-2,3-dihydroxy-3-methylpentanoate = (S)-3-methyl-2-oxopentanoate + H2O. It functions in the pathway amino-acid biosynthesis; L-isoleucine biosynthesis; L-isoleucine from 2-oxobutanoate: step 3/4. The protein operates within amino-acid biosynthesis; L-valine biosynthesis; L-valine from pyruvate: step 3/4. Functions in the biosynthesis of branched-chain amino acids. Catalyzes the dehydration of (2R,3R)-2,3-dihydroxy-3-methylpentanoate (2,3-dihydroxy-3-methylvalerate) into 2-oxo-3-methylpentanoate (2-oxo-3-methylvalerate) and of (2R)-2,3-dihydroxy-3-methylbutanoate (2,3-dihydroxyisovalerate) into 2-oxo-3-methylbutanoate (2-oxoisovalerate), the penultimate precursor to L-isoleucine and L-valine, respectively. This is Dihydroxy-acid dehydratase from Roseiflexus sp. (strain RS-1).